A 598-amino-acid chain; its full sequence is UvrABC system protein C (598 aa).

Residues 13–92 form the GIY-YIG domain; the sequence is SSPGVYLMKD…IKKYQPRYNV (80 aa). Residues 206–241 enclose the UVR domain; it reads DTTIANLEEAIKKASQEHKFEHAAALYRTLTLIRQT.

Belongs to the UvrC family. In terms of assembly, interacts with UvrB in an incision complex.

The protein localises to the cytoplasm. The UvrABC repair system catalyzes the recognition and processing of DNA lesions. UvrC both incises the 5' and 3' sides of the lesion. The N-terminal half is responsible for the 3' incision and the C-terminal half is responsible for the 5' incision. The chain is UvrABC system protein C from Chlamydia muridarum (strain MoPn / Nigg).